The sequence spans 58 residues: Weak neurotoxin D2B (58 aa).

Disulfide bonds link cysteine 3–cysteine 24, cysteine 17–cysteine 41, and cysteine 43–cysteine 54.

As to expression, expressed by the venom gland.

It is found in the secreted. Its function is as follows. Binds to muscle nicotinic acetylcholine receptor (nAChR) and inhibit acetylcholine from binding to the receptor, thereby impairing neuromuscular transmission. The protein is Weak neurotoxin D2B of Micrurus pyrrhocryptus (Coral snake).